The following is a 403-amino-acid chain: Argininosuccinate synthase (403 aa).

10–18 contacts ATP; it reads AYSGGVDTS. Tyr-89 contacts L-citrulline. An ATP-binding site is contributed by Gly-119. L-aspartate-binding residues include Thr-121, Asn-125, and Asp-126. Asn-125 provides a ligand contact to L-citrulline. Positions 129, 177, 186, 262, and 274 each coordinate L-citrulline.

It belongs to the argininosuccinate synthase family. Type 1 subfamily. Homotetramer.

The protein resides in the cytoplasm. The enzyme catalyses L-citrulline + L-aspartate + ATP = 2-(N(omega)-L-arginino)succinate + AMP + diphosphate + H(+). It functions in the pathway amino-acid biosynthesis; L-arginine biosynthesis; L-arginine from L-ornithine and carbamoyl phosphate: step 2/3. The protein is Argininosuccinate synthase of Synechococcus sp. (strain JA-3-3Ab) (Cyanobacteria bacterium Yellowstone A-Prime).